An 84-amino-acid polypeptide reads, in one-letter code: Control protein C.SmaI (84 aa).

The HTH cro/C1-type domain occupies 19–73 (VRSYRNINNLSQEQLAEISGLHRTYIGSVERKERNVTLSTLIILAKALNTSVPKL). A DNA-binding region (H-T-H motif) is located at residues 30–49 (QEQLAEISGLHRTYIGSVER).

May control expression of its associated restriction-modification system SmaI. This Serratia marcescens protein is Control protein C.SmaI.